The chain runs to 158 residues: MADEALFLLLHNEMVSGVYKSAEQGEVENGRCVTKLESMGFRVGQGLIERFTKDTARFKDELDIMKFICKDFWTTVFKKQIDNLRTNHQGIYVLQDNKFRLLIQLSAGKQYLEHASKYLAFTCGLIRGGLSNLGIKSIVTAEVSSMPACKFQVMIQKL.

This sequence belongs to the TRAPP small subunits family. BET3 subfamily. As to quaternary structure, homodimer. Part of a TRAPP complex. Heterodimer with TRAPPC3. The heterodimer TRAPPC6B-TRAPPC3 interacts with TRAPPC1 likely providing a core for TRAPP complex formation. Widely expressed. Expressed in lung, heart, liver, spleen, brain and kidney.

It localises to the golgi apparatus. Its subcellular location is the cis-Golgi network. It is found in the endoplasmic reticulum. Component of a transport protein particle (TRAPP) complex that may function in specific stages of inter-organelle traffic. Specifically involved in the early development of neural circuitry, likely by controlling the frequency and amplitude of intracellular calcium transients implicated in the regulation of neuron differentiation and survival. The polypeptide is Trafficking protein particle complex subunit 6B (Mus musculus (Mouse)).